A 355-amino-acid chain; its full sequence is S-adenosylmethionine:tRNA ribosyltransferase-isomerase (355 aa).

Belongs to the QueA family. As to quaternary structure, monomer.

Its subcellular location is the cytoplasm. The enzyme catalyses 7-aminomethyl-7-carbaguanosine(34) in tRNA + S-adenosyl-L-methionine = epoxyqueuosine(34) in tRNA + adenine + L-methionine + 2 H(+). It functions in the pathway tRNA modification; tRNA-queuosine biosynthesis. In terms of biological role, transfers and isomerizes the ribose moiety from AdoMet to the 7-aminomethyl group of 7-deazaguanine (preQ1-tRNA) to give epoxyqueuosine (oQ-tRNA). This Aeromonas hydrophila subsp. hydrophila (strain ATCC 7966 / DSM 30187 / BCRC 13018 / CCUG 14551 / JCM 1027 / KCTC 2358 / NCIMB 9240 / NCTC 8049) protein is S-adenosylmethionine:tRNA ribosyltransferase-isomerase.